A 356-amino-acid polypeptide reads, in one-letter code: Glucose-1-phosphate thymidylyltransferase (356 aa).

The Mg(2+) site is built by Asp-107 and Asp-221.

Belongs to the glucose-1-phosphate thymidylyltransferase family. The cofactor is Mg(2+).

It carries out the reaction dTTP + alpha-D-glucose 1-phosphate + H(+) = dTDP-alpha-D-glucose + diphosphate. It participates in antibiotic biosynthesis. In terms of biological role, involved in the biosynthesis of the two 2,6-deoxysugars, dTDP-L-oleandrose and dTDP-D-desosamine, attached to the macrolactone ring oleandolide to produce the aglycone antibiotic oleandomycin. Catalyzes the formation of dTDP-glucose from deoxythymidine triphosphate (dTTP) and glucose 1-phosphate. This chain is Glucose-1-phosphate thymidylyltransferase, found in Streptomyces antibioticus.